The sequence spans 527 residues: Amino acid transporter heavy chain SLC3A2 (527 aa).

Residues 1–31 are disordered; the sequence is MSQDTEVDMKDVELNELEPEKQPMNAADGAA. Topologically, residues 1–75 are cytoplasmic; it reads MSQDTEVDMK…AGSPGWVRTR (75 aa). Ser-2 is modified (phosphoserine). Thr-5 bears the Phosphothreonine mark. Over residues 7 to 21 the composition is skewed to basic and acidic residues; it reads VDMKDVELNELEPEK. Residue Lys-42 forms a Glycyl lysine isopeptide (Lys-Gly) (interchain with G-Cter in ubiquitin) linkage. Phosphoserine is present on Ser-58. A Glycyl lysine isopeptide (Lys-Gly) (interchain with G-Cter in SUMO2) cross-link involves residue Lys-59. Residues 76–98 form a helical; Signal-anchor for type II membrane protein membrane-spanning segment; it reads WALLLLFWLGWLGMLAGAVVIIV. At 99-527 the chain is on the extracellular side; it reads RAPRCRELPV…GLLLQFPFVA (429 aa). 4 N-linked (GlcNAc...) asparagine glycosylation sites follow: Asn-166, Asn-249, Asn-259, and Asn-263. Ser-300 bears the Phosphoserine mark. N-linked (GlcNAc...) asparagine glycosylation is found at Asn-318, Asn-386, and Asn-400. Ser-421 is subject to Phosphoserine. An N-linked (GlcNAc...) asparagine glycan is attached at Asn-510.

It belongs to the SLC3A transporter family. Disulfide-linked heterodimer with a non-glycosylated light chain (SLC7A5, SLC7A6, SLC7A7, SLC7A8, SLC7A10 or SLC7A11). Interacts with TLCD3A/CT120 and ICAM1. Constitutively and specifically associates with beta-1 integrins (alpha-2/beta-1, alpha-3/beta-1, alpha-5/beta-1 and alpha-6/beta-1), but minimally with alpha-4/beta-1. Interacts with LAPTM4B; recruits SLC3A2 and SLC7A5 to lysosomes to promote leucine uptake into these organelles and is required for mTORC1 activation. In terms of processing, phosphorylation on Ser-300 and on Ser-421 by ecto-protein kinases favors heterotypic cell-cell interactions. N-glycosylated; N-glycosylation is crucial for trafficking and stability of SLC3A2 to the plasma membrane. As to expression, in brain expressed on capillary endothelia in cerebral cortex (at protein level). Highest expression in kidney, jejunum, ileum, colon, placenta, testis and spleen. Lower levels found in liver, lung and brain with weakest expression in heart. Expressed in retina, inner blood-retinal barrier of retina, retinal vascular endothelial cells. Also expressed in C6 glioma cells and in the retinal capillary endothelial cell line TR-iBRB2.

It localises to the apical cell membrane. The protein resides in the cell membrane. It is found in the cell junction. The protein localises to the lysosome membrane. Its subcellular location is the melanosome. It localises to the basolateral cell membrane. Acts as a chaperone that facilitates biogenesis and trafficking of functional transporters heterodimers to the plasma membrane. Forms heterodimer with SLC7 family transporters (SLC7A5, SLC7A6, SLC7A7, SLC7A8, SLC7A10 and SLC7A11), a group of amino-acid antiporters. Heterodimers function as amino acids exchangers, the specificity of the substrate depending on the SLC7A subunit. Heterodimers formed by SLC3A2/SLC7A6 or SLC3A2/SLC7A7 mediate the uptake of dibasic amino acids. Heterodimer SLC3A2/SLC7A11 functions as an antiporter by mediating the exchange of extracellular anionic L-cystine and intracellular L-glutamate across the cellular plasma membrane. SLC3A2/SLC7A10 translocates small neutral L- and D-amino acids across the plasma membrane. SLC3A2/SLC75 or SLC3A2/SLC7A8 translocates neutral amino acids with broad specificity, thyroid hormones and L-DOPA. SLC3A2 is essential for plasma membrane localization, stability, and the transport activity of SLC7A5 and SLC7A8. When associated with LAPTM4B, the heterodimer SLC7A5 is recruited to lysosomes to promote leucine uptake into these organelles, and thereby mediates mTORC1 activation. Modulates integrin-related signaling and is essential for integrin-dependent cell spreading, migration and tumor progression. This Rattus norvegicus (Rat) protein is Amino acid transporter heavy chain SLC3A2.